A 1090-amino-acid chain; its full sequence is Exocyst complex component SEC5B (1090 aa).

The segment covering 1–12 (MSSSDDLDEDEL) has biased composition (acidic residues). The tract at residues 1–126 (MSSSDDLDED…ARKEDDRAWD (126 aa)) is disordered. Polar residues predominate over residues 23–46 (RDVTYQKPPSANSRKPVTNLVQQP). Low complexity predominate over residues 52-62 (AAAPPSKGGAK). Residues 96–109 (GGGGDGGGGRGRGG) show a composition bias toward gly residues. Positions 110–126 (SGKERGRARKEDDRAWD) are enriched in basic and acidic residues. Serine 179 bears the Phosphoserine mark. A compositionally biased stretch (polar residues) spans 486–502 (VQLSDDTSSMEDNQVQV). Disordered stretches follow at residues 486–511 (VQLS…ESAR), 984–1013 (ETVE…QSSV), and 1055–1090 (PVAK…PRRR). Residues 999–1010 (RGSEDAISDDKQ) show a composition bias toward basic and acidic residues. A compositionally biased stretch (polar residues) spans 1062–1071 (SRTSTDSPSR).

Belongs to the SEC5 family. In terms of assembly, the exocyst complex is composed of SEC3, SEC5, SEC6, SEC8, SEC10, EXO70A1 and EXO84B.

Functionally, component of the exocyst complex involved in the docking of exocytic vesicles with fusion sites on the plasma membrane during regulated or polarized secretion. Involved in polarized cell growth and organ morphogenesis. During cytokinesis, involved in cell plate initiation, cell plate maturation and formation of new primary cell wall. The protein is Exocyst complex component SEC5B (SEC5B) of Arabidopsis thaliana (Mouse-ear cress).